We begin with the raw amino-acid sequence, 423 residues long: Putative protein phosphatase 2C 50 (423 aa).

In terms of domain architecture, PPM-type phosphatase spans 52–380; sequence IFAFPFPTGT…DNMAAVVVPL (329 aa). Residues D74, G75, D320, and D371 each coordinate Mn(2+).

This sequence belongs to the PP2C family. Mg(2+) serves as cofactor. It depends on Mn(2+) as a cofactor.

It catalyses the reaction O-phospho-L-seryl-[protein] + H2O = L-seryl-[protein] + phosphate. The catalysed reaction is O-phospho-L-threonyl-[protein] + H2O = L-threonyl-[protein] + phosphate. This Arabidopsis thaliana (Mouse-ear cress) protein is Putative protein phosphatase 2C 50.